The primary structure comprises 463 residues: Ribosomal protein uS12 methylthiotransferase RimO (463 aa).

Positions Pro15 to Pro130 constitute an MTTase N-terminal domain. 6 residues coordinate [4Fe-4S] cluster: Cys24, Cys60, Cys89, Cys161, Cys165, and Cys168. The region spanning Leu147–Ala392 is the Radical SAM core domain. The TRAM domain occupies Ala395–Val463.

Belongs to the methylthiotransferase family. RimO subfamily. [4Fe-4S] cluster serves as cofactor.

The protein localises to the cytoplasm. It carries out the reaction L-aspartate(89)-[ribosomal protein uS12]-hydrogen + (sulfur carrier)-SH + AH2 + 2 S-adenosyl-L-methionine = 3-methylsulfanyl-L-aspartate(89)-[ribosomal protein uS12]-hydrogen + (sulfur carrier)-H + 5'-deoxyadenosine + L-methionine + A + S-adenosyl-L-homocysteine + 2 H(+). In terms of biological role, catalyzes the methylthiolation of an aspartic acid residue of ribosomal protein uS12. The sequence is that of Ribosomal protein uS12 methylthiotransferase RimO from Burkholderia mallei (strain NCTC 10229).